The primary structure comprises 79 residues: uncharacterized protein (79 aa).

The disordered stretch occupies residues 1–37; the sequence is MQLDVFSRMMFGDAAKPTEEKEEEQQEEVSQVSQTND.

This is an uncharacterized protein from Bacillus subtilis (strain 168).